A 62-amino-acid chain; its full sequence is Large ribosomal subunit protein bL33 (62 aa).

This sequence belongs to the bacterial ribosomal protein bL33 family.

The protein is Large ribosomal subunit protein bL33 of Acaryochloris marina (strain MBIC 11017).